Consider the following 475-residue polypeptide: Aspartyl/glutamyl-tRNA(Asn/Gln) amidotransferase subunit B (475 aa).

The protein belongs to the GatB/GatE family. GatB subfamily. Heterotrimer of A, B and C subunits.

The catalysed reaction is L-glutamyl-tRNA(Gln) + L-glutamine + ATP + H2O = L-glutaminyl-tRNA(Gln) + L-glutamate + ADP + phosphate + H(+). The enzyme catalyses L-aspartyl-tRNA(Asn) + L-glutamine + ATP + H2O = L-asparaginyl-tRNA(Asn) + L-glutamate + ADP + phosphate + 2 H(+). Allows the formation of correctly charged Asn-tRNA(Asn) or Gln-tRNA(Gln) through the transamidation of misacylated Asp-tRNA(Asn) or Glu-tRNA(Gln) in organisms which lack either or both of asparaginyl-tRNA or glutaminyl-tRNA synthetases. The reaction takes place in the presence of glutamine and ATP through an activated phospho-Asp-tRNA(Asn) or phospho-Glu-tRNA(Gln). This Thermoanaerobacter sp. (strain X514) protein is Aspartyl/glutamyl-tRNA(Asn/Gln) amidotransferase subunit B.